The primary structure comprises 403 residues: S-adenosylmethionine synthase (403 aa).

Histidine 15 is a binding site for ATP. Residue aspartate 17 coordinates Mg(2+). Glutamate 43 is a K(+) binding site. Glutamate 56 and glutamine 99 together coordinate L-methionine. Residues 99-109 (QSPDINQGVDR) are flexible loop. ATP-binding positions include 166-168 (DAK), 232-233 (KF), aspartate 241, 247-248 (RK), alanine 264, and lysine 268. L-methionine is bound at residue aspartate 241. Lysine 272 serves as a coordination point for L-methionine.

This sequence belongs to the AdoMet synthase family. In terms of assembly, homotetramer; dimer of dimers. Mg(2+) is required as a cofactor. The cofactor is K(+).

It is found in the cytoplasm. The catalysed reaction is L-methionine + ATP + H2O = S-adenosyl-L-methionine + phosphate + diphosphate. Its pathway is amino-acid biosynthesis; S-adenosyl-L-methionine biosynthesis; S-adenosyl-L-methionine from L-methionine: step 1/1. Functionally, catalyzes the formation of S-adenosylmethionine (AdoMet) from methionine and ATP. The overall synthetic reaction is composed of two sequential steps, AdoMet formation and the subsequent tripolyphosphate hydrolysis which occurs prior to release of AdoMet from the enzyme. The polypeptide is S-adenosylmethionine synthase (Xylella fastidiosa (strain Temecula1 / ATCC 700964)).